Reading from the N-terminus, the 436-residue chain is Testican-3 (436 aa).

An N-terminal signal peptide occupies residues 1-22 (MLKVSAVLCVCAAAWCSQSLAA). 8 disulfide bridges follow: Cys-90/Cys-101, Cys-95/Cys-111, Cys-139/Cys-169, Cys-142/Cys-162, Cys-151/Cys-183, Cys-317/Cys-341, Cys-352/Cys-359, and Cys-361/Cys-380. Residues 133–185 (GPILSTCKQCPVVYPSPVCGSDGHTYSFQCKLEYQACVLGKQISVKCEGHCPC) enclose the Kazal-like domain. One can recognise a Thyroglobulin type-1 domain in the interval 314 to 380 (DPPCQTELSN…GSRINGVADC (67 aa)). 2 O-linked (Xyl...) (glycosaminoglycan) serine glycosylation sites follow: Ser-387 and Ser-392. A disordered region spans residues 393–436 (GDFHEWTDDEDDEDDIMNDEDEIEDDDEDEGDDDDGGDDHDGYI). Acidic residues predominate over residues 399–430 (TDDEDDEDDIMNDEDEIEDDDEDEGDDDDGGD).

In terms of processing, contains chondroitin sulfate and heparan sulfate O-linked oligosaccharides. In terms of tissue distribution, expressed in brain.

It is found in the secreted. It localises to the extracellular space. The protein resides in the extracellular matrix. Functionally, may participate in diverse steps of neurogenesis. Inhibits the processing of pro-matrix metalloproteinase 2 (MMP-2) by MT1-MMP and MT3-MMP. May interfere with tumor invasion. The chain is Testican-3 (SPOCK3) from Pongo abelii (Sumatran orangutan).